Here is a 257-residue protein sequence, read N- to C-terminus: Probable dihydroorotate dehydrogenase B (NAD(+)), electron transfer subunit (257 aa).

One can recognise an FAD-binding FR-type domain in the interval 2-89 (EKPVICRIKE…RGPYGTYFEP (88 aa)). [2Fe-2S] cluster is bound by residues Cys-208, Cys-213, Cys-216, and Cys-226.

It belongs to the PyrK family. In terms of assembly, heterotetramer of 2 PyrK and 2 PyrD type B subunits. [2Fe-2S] cluster serves as cofactor. FAD is required as a cofactor.

Its pathway is pyrimidine metabolism; UMP biosynthesis via de novo pathway; orotate from (S)-dihydroorotate (NAD(+) route): step 1/1. Functionally, responsible for channeling the electrons from the oxidation of dihydroorotate from the FMN redox center in the PyrD type B subunit to the ultimate electron acceptor NAD(+). This chain is Probable dihydroorotate dehydrogenase B (NAD(+)), electron transfer subunit, found in Methanocaldococcus jannaschii (strain ATCC 43067 / DSM 2661 / JAL-1 / JCM 10045 / NBRC 100440) (Methanococcus jannaschii).